The chain runs to 612 residues: C4-dicarboxylate transport sensor protein DctB (612 aa).

2 helical membrane passes run 23–43 and 292–312; these read SLVI…YFAE and VLLI…LLTL. Positions 328 to 376 form a coiled coil; that stretch reads KRQLEERVLERTRELENANAQLQQEVHEREQAQRELMRAQDEVVQAGKL. A Histidine kinase domain is found at 385–599; it reads SISHELNQPL…VVRLHLLPGV (215 aa). His388 is subject to Phosphohistidine; by autocatalysis.

In terms of processing, autophosphorylated.

Its subcellular location is the cell inner membrane. It catalyses the reaction ATP + protein L-histidine = ADP + protein N-phospho-L-histidine.. Functionally, member of the two-component regulatory system DctB/DctD, which regulates C4-dicarboxylate transport via regulation of expression of the dctPQM operon and dctA. DctB functions as a membrane-associated protein kinase that phosphorylates DctD in response to environmental signals. This chain is C4-dicarboxylate transport sensor protein DctB, found in Pseudomonas aeruginosa (strain ATCC 15692 / DSM 22644 / CIP 104116 / JCM 14847 / LMG 12228 / 1C / PRS 101 / PAO1).